We begin with the raw amino-acid sequence, 342 residues long: Dihydroorotase (342 aa).

Positions 13 and 15 each coordinate Zn(2+). Residues 15 to 17 (HLR) and N41 each bind substrate. K99, H136, and H174 together coordinate Zn(2+). K99 is modified (N6-carboxylysine). H136 is a binding site for substrate. L218 contacts substrate. A Zn(2+)-binding site is contributed by D246. D246 is a catalytic residue. Substrate-binding residues include H250 and A262.

Belongs to the metallo-dependent hydrolases superfamily. DHOase family. Class II DHOase subfamily. In terms of assembly, homodimer. Requires Zn(2+) as cofactor.

The enzyme catalyses (S)-dihydroorotate + H2O = N-carbamoyl-L-aspartate + H(+). It functions in the pathway pyrimidine metabolism; UMP biosynthesis via de novo pathway; (S)-dihydroorotate from bicarbonate: step 3/3. In terms of biological role, catalyzes the reversible cyclization of carbamoyl aspartate to dihydroorotate. The sequence is that of Dihydroorotase from Synechocystis sp. (strain ATCC 27184 / PCC 6803 / Kazusa).